The primary structure comprises 170 residues: Acireductone dioxygenase (170 aa).

Fe(2+) contacts are provided by His-99, His-101, Glu-105, and His-144. Residues His-99, His-101, Glu-105, and His-144 each coordinate Ni(2+).

Belongs to the acireductone dioxygenase (ARD) family. In terms of assembly, monomer. It depends on Fe(2+) as a cofactor. Requires Ni(2+) as cofactor.

It catalyses the reaction 1,2-dihydroxy-5-(methylsulfanyl)pent-1-en-3-one + O2 = 3-(methylsulfanyl)propanoate + CO + formate + 2 H(+). The enzyme catalyses 1,2-dihydroxy-5-(methylsulfanyl)pent-1-en-3-one + O2 = 4-methylsulfanyl-2-oxobutanoate + formate + 2 H(+). It functions in the pathway amino-acid biosynthesis; L-methionine biosynthesis via salvage pathway; L-methionine from S-methyl-5-thio-alpha-D-ribose 1-phosphate: step 5/6. Its function is as follows. Catalyzes 2 different reactions between oxygen and the acireductone 1,2-dihydroxy-3-keto-5-methylthiopentene (DHK-MTPene) depending upon the metal bound in the active site. Fe-containing acireductone dioxygenase (Fe-ARD) produces formate and 2-keto-4-methylthiobutyrate (KMTB), the alpha-ketoacid precursor of methionine in the methionine recycle pathway. Ni-containing acireductone dioxygenase (Ni-ARD) produces methylthiopropionate, carbon monoxide and formate, and does not lie on the methionine recycle pathway. The chain is Acireductone dioxygenase from Bacillus thuringiensis (strain Al Hakam).